A 595-amino-acid chain; its full sequence is DNA mismatch repair protein MutL (595 aa).

The protein belongs to the DNA mismatch repair MutL/HexB family.

This protein is involved in the repair of mismatches in DNA. It is required for dam-dependent methyl-directed DNA mismatch repair. May act as a 'molecular matchmaker', a protein that promotes the formation of a stable complex between two or more DNA-binding proteins in an ATP-dependent manner without itself being part of a final effector complex. This is DNA mismatch repair protein MutL from Endomicrobium trichonymphae.